The following is a 461-amino-acid chain: Coronin-1A (461 aa).

Ser2 is subject to N-acetylserine. Phosphoserine; by PKC is present on Ser2. WD repeat units lie at residues 13–63 (HVFG…LVLP), 73–110 (NVPL…MVWE), 123–160 (PVIT…LVWD), 164–204 (GAAV…RVIE), 207–251 (KGTV…ALWD), 258–296 (PLSL…RYFE), and 302–349 (PFLH…EPIA). Residues 403-418 (ELRVNRGLDSARRRAT) show a composition bias toward basic and acidic residues. The tract at residues 403 to 434 (ELRVNRGLDSARRRATPEPSGTPSSDTVSRLE) is disordered. The residue at position 412 (Ser412) is a Phosphoserine; by PKC. Phosphothreonine is present on Thr418. The span at 421-430 (PSGTPSSDTV) shows a compositional bias: polar residues. Ser422 is modified (phosphoserine). Residues 424–461 (TPSSDTVSRLEEDVRNLNAIVQKLQERLDRLEETVQAK) are a coiled coil.

The protein belongs to the WD repeat coronin family. As to quaternary structure, binds actin. In terms of processing, phosphorylation at Ser-412 by PKC strongly down-regulates the association with actin. Polyubiquitinated by RNF128 with 'Lys-48'-linked chains, leading to proteasomal degradation. In terms of tissue distribution, expressed in spleen, lymph nodes, thymus, brain and at very lower levels in lung. Also expressed in cells of the lymphoid/myeloid lineage. Not expressed in Kuffper cells.

It is found in the cytoplasm. It localises to the cytoskeleton. The protein localises to the cell cortex. The protein resides in the cytoplasmic vesicle. Its subcellular location is the phagosome membrane. May be a crucial component of the cytoskeleton of highly motile cells, functioning both in the invagination of large pieces of plasma membrane, as well as in forming protrusions of the plasma membrane involved in cell locomotion. In mycobacteria-infected cells, its retention on the phagosomal membrane prevents fusion between phagosomes and lysosomes. This Mus musculus (Mouse) protein is Coronin-1A (Coro1a).